Here is an 862-residue protein sequence, read N- to C-terminus: Piwi-like protein 1 (862 aa).

Basic residues predominate over residues 1 to 13; sequence MTGRARARARGRA. Residues 1 to 48 are disordered; it reads MTGRARARARGRARGQETVQHVGAAASQQPGYIPPRPQQSPTEGDLVG. Arg-14 bears the Omega-N-methylarginine; by PRMT5; alternate mark. Residue Arg-14 is modified to Symmetric dimethylarginine; by PRMT5; alternate. At Arg-49 the chain carries Omega-N-methylarginine; by PRMT5. An Omega-N-methylarginine; alternate modification is found at Arg-53. Arg-53 is subject to Symmetric dimethylarginine; alternate. Residues 218-225 carry the D-box motif; that stretch reads RRLLKIMN. A PAZ domain is found at 279 to 392; the sequence is TVLDFMFNLY…LIPELCYLTG (114 aa). The required for binding 2'-O-methylated 3'-end of piRNAs stretch occupies residues 317-319; it reads TYR. Arg-371 bears the Omega-N-methylarginine; by PRMT5 mark. Residues 480-616 are MID region; that stretch reads SKETRGAPLI…LQMNCKMGGE (137 aa). The 293-residue stretch at 556–848 folds into the Piwi domain; sequence IVVCLLSSNR…LAFLVGQSIH (293 aa). Catalysis depends on residues Asp-633, Glu-671, Asp-703, and His-837.

It belongs to the argonaute family. Piwi subfamily. As to quaternary structure, interacts (via Piwi domain) with DICER1, suggesting that it forms ribonucleoprotein RISC complexes; this interaction is regulated by HSP90AB1 activity. Interacts with MAEL, KIF17, PABPC1, PRMT5 and WDR77. Interacts (when methylated on arginine residues) with TDRD1, TDRKH/TDRD2, RNF17/TDRD4, TDRD6, TDRD7 and TDRD9. Interacts with CLOCK. Interacts with MOV10L1. Interacts with ANAPC10; interaction oly takes place following piRNA-binding. Interacts with RNF8; leading to sequester RNF8 in the cytoplasm. Interacts with Tex19.1 and, probably, Tex19.2. Mg(2+) serves as cofactor. Ubiquitinated by the anaphase promoting complex/cyclosome (APC/C) in late spermatids, leading to its degradation. Ubiquitination only takes place following piRNA-binding in adult testis. Ubiquitination and degradation in late spermatogenesis by APC/C is probably required to release RNF8 from the cytoplasm and promote histone to protamine exchange by RNF8. Post-translationally, arginine methylation by PRMT5 is required for the interaction with Tudor domain-containing protein (TDRD1, TDRKH/TDRD2, RNF17/TDRD4, TDRD6, TDRD7 and TDRD9) and subsequent localization to the meiotic nuage, also named P granule. Expressed in brain. Expressed in testis, specifically in spermatocytes (at protein level). Only detected in germ lineage cells of adult testis. Expressed in male gonads 2 weeks after birth at the initiation of spermatogenesis, but not expressed in female gonads.

It localises to the cytoplasm. Endoribonuclease that plays a central role in postnatal germ cells by repressing transposable elements and preventing their mobilization, which is essential for the germline integrity. Acts via the piRNA metabolic process, which mediates the repression of transposable elements during meiosis by forming complexes composed of piRNAs and Piwi proteins and governs the methylation and subsequent repression of transposons. Directly binds methylated piRNAs, a class of 24 to 30 nucleotide RNAs that are generated by a Dicer-independent mechanism and are primarily derived from transposons and other repeated sequence elements. Strongly prefers a uridine in the first position of their guide (g1U preference, also named 1U-bias). Not involved in the piRNA amplification loop, also named ping-pong amplification cycle. Acts as an endoribonuclease that cleaves transposon messenger RNAs. Besides their function in transposable elements repression, piRNAs are probably involved in other processes during meiosis such as translation regulation. Probable component of some RISC complex, which mediates RNA cleavage and translational silencing. Also plays a role in the formation of chromatoid bodies and is required for some miRNAs stability. Required to sequester RNF8 in the cytoplasm until late spermatogenesis; RNF8 being released upon ubiquitination and degradation of PIWIL1. This is Piwi-like protein 1 from Mus musculus (Mouse).